Here is a 125-residue protein sequence, read N- to C-terminus: Apolipoprotein C-IV (125 aa).

A signal peptide spans 1–27; that stretch reads MSLLRHSLQALPALCLCVLVLACIGAC.

Belongs to the apolipoprotein C4 family.

It localises to the secreted. Its function is as follows. May participate in lipoprotein metabolism. In Ateles geoffroyi (Black-handed spider monkey), this protein is Apolipoprotein C-IV (APOC4).